We begin with the raw amino-acid sequence, 458 residues long: MVLSQEHRDLLDAFQKEVEQRRPGDLLQFAANYFNKKLEEERLFVRSQESLALSKGVVLFPGSEGCGANRAAGSPDARKTGEDEDVMFKLPFVEHDPHSRHIYDDNKHGHDSCDPHTSFSREPGAGLFQGGYNMGQEAQKEAQTDFDPKASEVSSILKQRNVPRKSGVNSKPLPMNFNAERRTSVSGETLKPDHFSDWTPENYTEKTREQLKGLESAVGKNFLFNKLDSDSKTLVINSLEEKLVSKGQEIIRQGDEGDYFYIVEKGTVDFFLDDRKVNTYGPGSCFGELALMYNSPRAVTAVAATDCVLWALDRLTFRRILLSGSFKKRLLYDDFLKSMPLLKSLSNYDRAKLADALETEYYEAGQQVISEGDVGENFYLIEYGEADVSKRGVGVVQHLKKGDYFGEVALLNDLPRQATVTATTKLKVATLGKSGFQRLLGPVVEVLRLNDPTRADKR.

The interval 28–222 (QFAANYFNKK…GLESAVGKNF (195 aa)) is dimerization and phosphorylation. Serine 184 carries the phosphoserine modification. Residues 223 to 338 (LFNK…FLKS), glutamate 288, arginine 297, 341 to 457 (LLKS…RADK), glutamate 407, and arginine 416 each bind 3',5'-cyclic AMP.

The protein belongs to the cAMP-dependent kinase regulatory chain family. As to quaternary structure, tetramer, composed of 2 regulatory (R) and 2 catalytic (C) subunits. In the presence of cAMP it dissociates into 2 active monomeric C subunits and an R dimer.

In Eremothecium gossypii (strain ATCC 10895 / CBS 109.51 / FGSC 9923 / NRRL Y-1056) (Yeast), this protein is cAMP-dependent protein kinase regulatory subunit (PKAR).